Consider the following 167-residue polypeptide: Ubiquitin-fold modifier-conjugating enzyme 1 (167 aa).

The active-site Glycyl thioester intermediate is the C116. K122 participates in a covalent cross-link: Glycyl lysine isopeptide (Lys-Gly) (interchain with G-Cter in UFM1).

It belongs to the ubiquitin-conjugating enzyme family. UFC1 subfamily. As to quaternary structure, interacts with UBA5 (via C-terminus). Interacts with UFL1. Interacts with UFM1. Interacts with KIRREL3. Post-translationally, ufmylated at Lys-122. Deufmylated by UFSP1.

In terms of biological role, E2-like enzyme which specifically catalyzes the second step in ufmylation. Accepts the ubiquitin-like modifier UFM1 from the E1 enzyme UBA5 and forms an intermediate with UFM1 via a thioester linkage. Ufmylation is involved in various processes, such as ribosome recycling, response to DNA damage, interferon response or reticulophagy (also called ER-phagy). This is Ubiquitin-fold modifier-conjugating enzyme 1 from Rattus norvegicus (Rat).